The chain runs to 172 residues: MPYPKSMVEPMRKELTRLGIDELKSPDDVDAAFGAAEDETLLLIINSVCGCAAGGARPAVAQALETGPTPDHAVTVFAGQDVAATDYVRDTHLPGIPPSSPFMALFRNGQPVYVIERKHIEGREPAAISADLVEALQAYCTDEAPPSDAPSRPDLSSSPNAGGLPSTFQSIS.

The disordered stretch occupies residues 141 to 172; it reads TDEAPPSDAPSRPDLSSSPNAGGLPSTFQSIS. A compositionally biased stretch (polar residues) spans 154-172; it reads DLSSSPNAGGLPSTFQSIS.

It belongs to the bacilliredoxin family.

In Salinibacter ruber (strain DSM 13855 / M31), this protein is Bacilliredoxin SRU_0242.